The chain runs to 288 residues: Diaminopimelate epimerase (288 aa).

The substrate site is built by Asn-14 and Asn-67. Catalysis depends on Cys-76, which acts as the Proton donor. Residues 77–78, Asn-166, Asn-199, and 217–218 contribute to the substrate site; these read GN and ER. Catalysis depends on Cys-226, which acts as the Proton acceptor. Substrate is bound at residue 227–228; sequence GT.

Belongs to the diaminopimelate epimerase family. In terms of assembly, homodimer.

Its subcellular location is the cytoplasm. It catalyses the reaction (2S,6S)-2,6-diaminopimelate = meso-2,6-diaminopimelate. The protein operates within amino-acid biosynthesis; L-lysine biosynthesis via DAP pathway; DL-2,6-diaminopimelate from LL-2,6-diaminopimelate: step 1/1. Catalyzes the stereoinversion of LL-2,6-diaminopimelate (L,L-DAP) to meso-diaminopimelate (meso-DAP), a precursor of L-lysine and an essential component of the bacterial peptidoglycan. The polypeptide is Diaminopimelate epimerase (Bacillus cereus (strain AH820)).